The chain runs to 369 residues: Peptide chain release factor 2 (369 aa).

Q251 carries the N5-methylglutamine modification.

This sequence belongs to the prokaryotic/mitochondrial release factor family. Methylated by PrmC. Methylation increases the termination efficiency of RF2.

The protein localises to the cytoplasm. Peptide chain release factor 2 directs the termination of translation in response to the peptide chain termination codons UGA and UAA. The protein is Peptide chain release factor 2 of Chlamydia trachomatis serovar A (strain ATCC VR-571B / DSM 19440 / HAR-13).